The primary structure comprises 56 residues: Endoregulin (56 aa).

A helical transmembrane segment spans residues 25–45; the sequence is LTVIGLFTSTFLLFVLFAVVF.

As to quaternary structure, homooligomer. Can also form heterooligomers with other sarcoplasmic/endoplasmic reticulum calcium ATPase (SERCA) regulators ARLN, PLN, SLN and STRIT1/DWORF. Monomer. Interacts as a monomer with ATP2A2/SERCA2; the interaction results in inhibition of ATP2A2 Ca(2+) affinity. Largely expressed in non-muscle tissues with the exception of weak expression in body wall muscles at 14.5 dpc. Expressed in epithelial cells of the trachea, bronchus, lung, intestine, pancreas, and liver.

The protein localises to the endoplasmic reticulum membrane. Its function is as follows. Inhibits the activity of the calcium ATPases ATP2A2/SERCA2 and ATP2A3/SERCA3 by decreasing their apparent affinity for Ca(2+). In Mus musculus (Mouse), this protein is Endoregulin (Erln).